We begin with the raw amino-acid sequence, 30 residues long: GIFLDKLKNFAKGVAQSLLNKASCKLSGQC.

C24 and C30 are disulfide-bonded.

As to expression, expressed by the skin glands.

It localises to the secreted. In terms of biological role, shows antibacterial activity against representative Gram-negative and Gram-positive bacterial species, and hemolytic activity. The polypeptide is Brevinin-2Ej (Pelophylax ridibundus (Marsh frog)).